Here is a 152-residue protein sequence, read N- to C-terminus: Proline-rich acidic protein 1 (152 aa).

Positions 1-20 (MKRFLLATCLVAVLLWEAGA) are cleaved as a signal peptide.

As to quaternary structure, interacts with MTTP. Interacts with MAD1L1. As to expression, highly expressed in the small intestine where it shows a proximal-distal graded expression.

It localises to the secreted. The protein resides in the endoplasmic reticulum. In terms of biological role, lipid-binding protein which promotes lipid absorption by facilitating MTTP-mediated lipid transfer (mainly triglycerides and phospholipids) and MTTP-mediated apoB lipoprotein assembly and secretion. Protects the gastrointestinal epithelium from irradiation-induced apoptosis. May play an important role in maintaining normal growth homeostasis in epithelial cells. Involved in p53/TP53-dependent cell survival after DNA damage. The polypeptide is Proline-rich acidic protein 1 (Prap1) (Rattus norvegicus (Rat)).